Here is a 901-residue protein sequence, read N- to C-terminus: Protein translocase subunit SecA (901 aa).

ATP-binding positions include Q87, 105–109 (GEGKT), and D512. The disordered stretch occupies residues 859 to 901 (HQDDDSAAAAALAAQTGERKVGRNDPCPCGSGKKYKQCHGRLQ). Zn(2+) is bound by residues C885, C887, C896, and H897. Over residues 891 to 901 (KKYKQCHGRLQ) the composition is skewed to basic residues.

Belongs to the SecA family. As to quaternary structure, monomer and homodimer. Part of the essential Sec protein translocation apparatus which comprises SecA, SecYEG and auxiliary proteins SecDF-YajC and YidC. Zn(2+) is required as a cofactor.

It is found in the cell inner membrane. It localises to the cytoplasm. The enzyme catalyses ATP + H2O + cellular proteinSide 1 = ADP + phosphate + cellular proteinSide 2.. Its function is as follows. Part of the Sec protein translocase complex. Interacts with the SecYEG preprotein conducting channel. Has a central role in coupling the hydrolysis of ATP to the transfer of proteins into and across the cell membrane, serving both as a receptor for the preprotein-SecB complex and as an ATP-driven molecular motor driving the stepwise translocation of polypeptide chains across the membrane. This Escherichia coli O157:H7 protein is Protein translocase subunit SecA.